Consider the following 469-residue polypeptide: 6-phosphofructo-2-kinase/fructose-2,6-bisphosphatase 4 (469 aa).

Residues 1–249 (MASPRELTQN…YYLMNIHVTP (249 aa)) are 6-phosphofructo-2-kinase. 46-54 (GLPARGKTY) serves as a coordination point for ATP. Beta-D-fructose 6-phosphate contacts are provided by arginine 79 and arginine 103. The active site involves aspartate 129. 2 residues coordinate beta-D-fructose 6-phosphate: threonine 131 and arginine 137. The active site involves cysteine 159. Residue 168-173 (NIVQVK) coordinates ATP. Residues lysine 173, arginine 194, and tyrosine 198 each coordinate beta-D-fructose 6-phosphate. The segment at 250-469 (RSIYLCRHGE…EALVTVPAHQ (220 aa)) is fructose-2,6-bisphosphatase. Beta-D-fructose 2,6-bisphosphate is bound at residue arginine 256. Histidine 257 serves as the catalytic Tele-phosphohistidine intermediate. Asparagine 263, glycine 269, and arginine 306 together coordinate beta-D-fructose 2,6-bisphosphate. Glutamate 326 (proton donor/acceptor) is an active-site residue. Beta-D-fructose 2,6-bisphosphate-binding residues include tyrosine 337, arginine 351, lysine 355, tyrosine 366, glutamine 392, and arginine 396. Residue 348–351 (FALR) coordinates ATP. ATP is bound by residues 392–396 (QAVMR) and tyrosine 428. Position 444 is a phosphothreonine; by PKC (threonine 444).

In the C-terminal section; belongs to the phosphoglycerate mutase family. In terms of assembly, homodimer.

It carries out the reaction beta-D-fructose 2,6-bisphosphate + H2O = beta-D-fructose 6-phosphate + phosphate. The catalysed reaction is beta-D-fructose 6-phosphate + ATP = beta-D-fructose 2,6-bisphosphate + ADP + H(+). Its activity is regulated as follows. The most important regulatory mechanism of these opposing activities is by phosphorylation and dephosphorylation of the enzyme. Functionally, synthesis and degradation of fructose 2,6-bisphosphate. The chain is 6-phosphofructo-2-kinase/fructose-2,6-bisphosphatase 4 (PFKFB4) from Homo sapiens (Human).